A 412-amino-acid polypeptide reads, in one-letter code: ATP phosphoribosyltransferase regulatory subunit (412 aa).

The protein belongs to the class-II aminoacyl-tRNA synthetase family. HisZ subfamily. In terms of assembly, heteromultimer composed of HisG and HisZ subunits.

The protein localises to the cytoplasm. It functions in the pathway amino-acid biosynthesis; L-histidine biosynthesis; L-histidine from 5-phospho-alpha-D-ribose 1-diphosphate: step 1/9. Required for the first step of histidine biosynthesis. May allow the feedback regulation of ATP phosphoribosyltransferase activity by histidine. The protein is ATP phosphoribosyltransferase regulatory subunit of Dehalococcoides mccartyi (strain ATCC BAA-2100 / JCM 16839 / KCTC 5957 / BAV1).